A 191-amino-acid polypeptide reads, in one-letter code: CASP-like protein 2U3 (191 aa).

Over 1–25 (MGAYDGAEAPRAAPASTAANSRPSR) the chain is Cytoplasmic. The helical transmembrane segment at 26–46 (LLLLHSLLLRLVAVVVSILVI) threads the bilayer. The Extracellular portion of the chain corresponds to 47–68 (AVMVHAKQRVMIFKAEWDNSKA). A helical transmembrane segment spans residues 69–89 (FVALVAISAICLGYSFLQFIL). Residues 90–114 (SAFHLCSKSWKSPTKCWAWMNFIAD) lie on the Cytoplasmic side of the membrane. A helical transmembrane segment spans residues 115–135 (QILTYAMLGAAAAAAELAYIA). Topologically, residues 136-157 (KNGSSRAQWQPICSTFNTFCTR) are extracellular. N-linked (GlcNAc...) asparagine glycosylation occurs at asparagine 137. A helical membrane pass occupies residues 158–178 (AGASIILSFIAVLALANSSAI). Residues 179 to 191 (SAYHLFRRPSSSV) lie on the Cytoplasmic side of the membrane.

It belongs to the Casparian strip membrane proteins (CASP) family. As to quaternary structure, homodimer and heterodimers.

It localises to the cell membrane. The polypeptide is CASP-like protein 2U3 (Selaginella moellendorffii (Spikemoss)).